We begin with the raw amino-acid sequence, 339 residues long: Zinc metalloprotease MJ0392 (339 aa).

2 helical membrane-spanning segments follow: residues 10 to 30 and 33 to 53; these read IMGI…VIIG and IMNN…SVVL. A Zn(2+)-binding site is contributed by histidine 54. Residue glutamate 55 is part of the active site. Histidine 58 is a binding site for Zn(2+). Helical transmembrane passes span 96–116 and 125–145; these read IAGP…SQFF and LLYT…IPAF. Aspartate 148 is a Zn(2+) binding site. 2 helical membrane passes run 180-200 and 251-271; these read IMLL…SLFV and YFGY…IGNI. 2 consecutive CBS domains span residues 226–281 and 281–335; these read MTPN…VRDY and YMEK…ELKE.

It belongs to the peptidase M50B family. As to quaternary structure, monomer. Requires Zn(2+) as cofactor.

It localises to the cell membrane. With respect to regulation, inhibited by 1,10-phenanthroline. Functionally, a site-2 regulated intramembrane protease (S2P) that cleaves type-2 transmembrane proteins within their membrane-spanning domains; its endogenous substrate is unknown. Regulated intramembrane proteolysis (RIP) occurs when an extracytoplasmic signal triggers a concerted proteolytic cascade to transmit information and elicit cellular responses. A membrane-spanning regulatory substrate protein is first cut extracytoplasmically (site-1 protease, S1P), then within the membrane itself (site-2 protease, S2P, this enzyme), while cytoplasmic proteases finish degrading the regulatory protein, liberating the effector protein. Possible signals, S1P and substrates are unknown in this organism. The protein is Zinc metalloprotease MJ0392 of Methanocaldococcus jannaschii (strain ATCC 43067 / DSM 2661 / JAL-1 / JCM 10045 / NBRC 100440) (Methanococcus jannaschii).